We begin with the raw amino-acid sequence, 300 residues long: Haloalkane dehalogenase (300 aa).

Positions Ala-32–Phe-155 constitute an AB hydrolase-1 domain. The Nucleophile role is filled by Asp-109. Glu-133 (proton donor) is an active-site residue. The active-site Proton acceptor is His-273.

This sequence belongs to the haloalkane dehalogenase family. Type 2 subfamily. Monomer.

The enzyme catalyses 1-haloalkane + H2O = a halide anion + a primary alcohol + H(+). Catalyzes hydrolytic cleavage of carbon-halogen bonds in halogenated aliphatic compounds, leading to the formation of the corresponding primary alcohols, halide ions and protons. In Mycobacterium bovis (strain ATCC BAA-935 / AF2122/97), this protein is Haloalkane dehalogenase.